Consider the following 568-residue polypeptide: Urease subunit alpha (568 aa).

Residues 131-568 (GGMDAHIHFI…LPLAQRYFLY (438 aa)) form the Urease domain. Ni(2+) contacts are provided by His136, His138, and Lys219. Lys219 is modified (N6-carboxylysine). His221 serves as a coordination point for substrate. 2 residues coordinate Ni(2+): His248 and His274. The Proton donor role is filled by His322. A Ni(2+)-binding site is contributed by Asp362.

Belongs to the metallo-dependent hydrolases superfamily. Urease alpha subunit family. As to quaternary structure, heterotrimer of UreA (gamma), UreB (beta) and UreC (alpha) subunits. Three heterotrimers associate to form the active enzyme. Requires Ni cation as cofactor. Post-translationally, carboxylation allows a single lysine to coordinate two nickel ions.

It localises to the cytoplasm. It carries out the reaction urea + 2 H2O + H(+) = hydrogencarbonate + 2 NH4(+). It participates in nitrogen metabolism; urea degradation; CO(2) and NH(3) from urea (urease route): step 1/1. The polypeptide is Urease subunit alpha (Cereibacter sphaeroides (strain ATCC 17025 / ATH 2.4.3) (Rhodobacter sphaeroides)).